We begin with the raw amino-acid sequence, 451 residues long: Phenylalanine--tRNA ligase, mitochondrial (451 aa).

Substrate contacts are provided by residues 157–160 (SAHQ), arginine 179, 186–188 (QHY), and 193–195 (QLE). Residue lysine 202 is modified to N6-acetyllysine. Residues glutamate 287 and phenylalanine 312 each coordinate substrate. One can recognise an FDX-ACB domain in the interval 358–450 (SKYPAVFNDI…AVQLLGVEGR (93 aa)).

The protein belongs to the class-II aminoacyl-tRNA synthetase family. Monomer.

The protein resides in the mitochondrion matrix. It localises to the mitochondrion. The catalysed reaction is tRNA(Phe) + L-phenylalanine + ATP = L-phenylalanyl-tRNA(Phe) + AMP + diphosphate + H(+). Its function is as follows. Is responsible for the charging of tRNA(Phe) with phenylalanine in mitochondrial translation. To a lesser extent, also catalyzes direct attachment of m-Tyr (an oxidized version of Phe) to tRNA(Phe), thereby opening the way for delivery of the misacylated tRNA to the ribosome and incorporation of ROS-damaged amino acid into proteins. This Mus musculus (Mouse) protein is Phenylalanine--tRNA ligase, mitochondrial (Fars2).